The primary structure comprises 166 residues: Protein-export protein SecB (166 aa).

The protein belongs to the SecB family. In terms of assembly, homotetramer, a dimer of dimers. One homotetramer interacts with 1 SecA dimer.

It is found in the cytoplasm. Functionally, one of the proteins required for the normal export of preproteins out of the cell cytoplasm. It is a molecular chaperone that binds to a subset of precursor proteins, maintaining them in a translocation-competent state. It also specifically binds to its receptor SecA. The polypeptide is Protein-export protein SecB (Cereibacter sphaeroides (strain ATCC 17029 / ATH 2.4.9) (Rhodobacter sphaeroides)).